A 587-amino-acid polypeptide reads, in one-letter code: Serine/threonine-protein phosphatase 2A 65 kDa regulatory subunit A beta isoform (587 aa).

An N-acetylserine modification is found at serine 2. HEAT repeat units lie at residues 2 to 42 (SMID…ALGE), 44 to 80 (RTRK…YVGG), 81 to 119 (VEYA…QMRE), 158 to 196 (DMLK…TVES), 197 to 235 (AHLK…LLEP), 236 to 274 (QDCV…AVGP), 275 to 313 (EPTR…ILNP), 315 to 352 (IAIQ…VLGK), 353 to 391 (DATI…VIGI), 393 to 430 (LLSQ…QLGV), 432 to 469 (FFDD…EFGP), 470 to 508 (EWAM…VMGS), 509 to 547 (EITC…IVDQ), and 549 to 586 (VVEK…VMMS).

This sequence belongs to the phosphatase 2A regulatory subunit A family. In terms of assembly, PP2A consists of a common heterodimeric core enzyme, composed of a 36 kDa catalytic subunit (subunit C) and a 65 kDa constant regulatory subunit (subunit A), that associates with a variety of regulatory subunits such as subunits B (the R2/B/PR55/B55, R3/B''/PR72/PR130/PR59 and R5/B'/B56 families). Interacts with B'THETA. Interacts with SRK2E/OST1. Interacts with SIC/RON3. In terms of tissue distribution, ubiquitous, with higher levels in roots and flowers (at protein level).

The protein localises to the cytoplasm. Its subcellular location is the cytosol. It is found in the nucleus. The protein resides in the peroxisome. Functionally, the A subunit of protein phosphatase 2A serves as a scaffolding molecule to coordinate the assembly of the catalytic subunit and a variable regulatory B subunit. Involved during developmental process such as seedling and floral developments. Seems to act as a negative regulator of PP2A catalytic activity. Associates with the serine/threonine-protein phosphatase PP2A catalytic subunit C and regulatory subunit B' to positively regulates beta-oxidation of fatty acids and protoauxins in peroxisomes by dephosphorylating peroxisomal beta-oxidation-related proteins. This Arabidopsis thaliana (Mouse-ear cress) protein is Serine/threonine-protein phosphatase 2A 65 kDa regulatory subunit A beta isoform (PP2AA2).